The primary structure comprises 280 residues: 3-dehydroshikimate dehydratase (280 aa).

Substrate contacts are provided by tyrosine 70, arginine 102, and glutamate 142. Residue glutamate 142 participates in Mn(2+) binding. Histidine 144 (proton acceptor) is an active-site residue. The substrate site is built by aspartate 172 and histidine 175. Residue aspartate 172 participates in Mn(2+) binding. Mn(2+) is bound at residue histidine 198. Substrate is bound by residues tyrosine 217 and glutamate 253. Position 253 (glutamate 253) interacts with Mn(2+).

As to quaternary structure, homodimer. Mn(2+) serves as cofactor.

The enzyme catalyses 3-dehydroshikimate = 3,4-dihydroxybenzoate + H2O. It participates in aromatic compound metabolism; 3,4-dihydroxybenzoate biosynthesis; 3,4-dihydroxybenzoate from 3-dehydroquinate: step 2/2. The protein operates within siderophore biosynthesis; petrobactin biosynthesis. Its function is as follows. Involved in the biosynthesis of petrobactin, a catecholate siderophore that functions in both iron acquisition and virulence. Catalyzes the conversion of 3-dehydroshikimate to 3,4-dihydroxybenzoate (3,4-DHBA). In Bacillus anthracis, this protein is 3-dehydroshikimate dehydratase.